Here is a 56-residue protein sequence, read N- to C-terminus: Large ribosomal subunit protein bL32 (56 aa).

Basic residues predominate over residues methionine 1–arginine 16. Positions methionine 1 to histidine 37 are disordered. A compositionally biased stretch (polar residues) spans alanine 25–glutamate 35.

It belongs to the bacterial ribosomal protein bL32 family.

The polypeptide is Large ribosomal subunit protein bL32 (Pseudoalteromonas atlantica (strain T6c / ATCC BAA-1087)).